Reading from the N-terminus, the 464-residue chain is MTKTRQETDTMGKMDVDASRYWGAQTERSIHNFPIGRDTFVWGRPVIRALGILKKGAAQANAELGELPADVADLIVKAADEVIAGKLDEHFPLVVFQTGSGTQSNMNANEVISNRAIELAGGEMGSKKPVHPNDHVNRGQSSNDTFPTAMHIAVVLELNERLYGAVGKLRDTLHAKAEQYKDLVKVGRTHLQDATPITLGQEIGGWVAQLDYALSEVKHAGEGLLDLAIGGTAVGTGLNAHPKFGDLAAKKYEEETGYHFRSAENKFAALSAHDALVQTSAALRTLAGALMKMANDVRWLASGPRNGIGEITIPENEPGSSIMPGKVNPTQSEAMTMVATRVFGNDATVAFAGSQGNFQLNVFKPVMVHAVLESIRLISDACLAFNDHCAVGIQPNEAKIKENLDKNLMQVTALNRHIGYDKAAAIAKKAHKEGTSLKDAALALGYVTEDEFAQWVVPLGMTHN.

Substrate is bound by residues 100-102, 131-134, 141-143, and threonine 189; these read SGT, HPND, and SSN. The Proton donor/acceptor role is filled by histidine 190. Residue serine 320 is part of the active site. Residues serine 321 and 326–328 each bind substrate; that span reads KVN.

This sequence belongs to the class-II fumarase/aspartase family. Fumarase subfamily. Homotetramer.

It is found in the cytoplasm. It carries out the reaction (S)-malate = fumarate + H2O. The protein operates within carbohydrate metabolism; tricarboxylic acid cycle; (S)-malate from fumarate: step 1/1. Involved in the TCA cycle. Catalyzes the stereospecific interconversion of fumarate to L-malate. This Deinococcus radiodurans (strain ATCC 13939 / DSM 20539 / JCM 16871 / CCUG 27074 / LMG 4051 / NBRC 15346 / NCIMB 9279 / VKM B-1422 / R1) protein is Fumarate hydratase class II.